The chain runs to 346 residues: FMRFamide-related peptides type HF-1 (346 aa).

The first 19 residues, M1 to S19, serve as a signal peptide directing secretion. The propeptide occupies S20 to N45. F51 is modified (phenylalanine amide). The propeptide occupies A54–S94. F100 is modified (phenylalanine amide). Positions S103 to D109 are excised as a propeptide. F115 is subject to Phenylalanine amide. Residues S118–E203 constitute a propeptide that is removed on maturation. Positions Y137–E185 are disordered. A compositionally biased stretch (basic and acidic residues) spans R141–L152. Positions D160 to K172 are enriched in polar residues. Residues F173–E185 are compositionally biased toward basic and acidic residues. F209 and F216 each carry phenylalanine amide. A propeptide spanning residues G219 to D226 is cleaved from the precursor. F232 bears the Phenylalanine amide mark. Positions S235–E243 are excised as a propeptide. A phenylalanine amide mark is found at F249 and F256. Residues G259 to E267 constitute a propeptide that is removed on maturation. F273 carries the post-translational modification Phenylalanine amide. Positions S276–I283 are excised as a propeptide. A Phenylalanine amide modification is found at F290. Residues S293–D301 constitute a propeptide that is removed on maturation. A phenylalanine amide mark is found at F307 and F314. Residues S317–D325 constitute a propeptide that is removed on maturation. Phenylalanine amide is present on residues F331 and F338. Positions G341–S346 are excised as a propeptide.

This sequence belongs to the FARP (FMRFamide related peptide) family. As to expression, central nervous system.

It localises to the secreted. Functionally, can function as both cardioregulatory hormones and transmitters and may regulate cardiovascular function. This is FMRFamide-related peptides type HF-1 from Cornu aspersum (Brown garden snail).